The sequence spans 323 residues: Delta-aminolevulinic acid dehydratase (323 aa).

3 residues coordinate Zn(2+): Cys118, Cys120, and Cys128. Catalysis depends on Lys195, which acts as the Schiff-base intermediate with substrate. The 5-aminolevulinate site is built by Arg205 and Arg217. Mg(2+) is bound at residue Glu233. Residue Lys248 is the Schiff-base intermediate with substrate of the active site. Residues Ser274 and Tyr313 each coordinate 5-aminolevulinate.

It belongs to the ALAD family. As to quaternary structure, homooctamer. It depends on Zn(2+) as a cofactor.

It carries out the reaction 2 5-aminolevulinate = porphobilinogen + 2 H2O + H(+). The protein operates within porphyrin-containing compound metabolism; protoporphyrin-IX biosynthesis; coproporphyrinogen-III from 5-aminolevulinate: step 1/4. Its function is as follows. Catalyzes an early step in the biosynthesis of tetrapyrroles. Binds two molecules of 5-aminolevulinate per subunit, each at a distinct site, and catalyzes their condensation to form porphobilinogen. The protein is Delta-aminolevulinic acid dehydratase (hemB) of Staphylococcus aureus.